Reading from the N-terminus, the 110-residue chain is Large ribosomal subunit protein uL22 (110 aa).

This sequence belongs to the universal ribosomal protein uL22 family. Part of the 50S ribosomal subunit.

In terms of biological role, this protein binds specifically to 23S rRNA; its binding is stimulated by other ribosomal proteins, e.g. L4, L17, and L20. It is important during the early stages of 50S assembly. It makes multiple contacts with different domains of the 23S rRNA in the assembled 50S subunit and ribosome. Its function is as follows. The globular domain of the protein is located near the polypeptide exit tunnel on the outside of the subunit, while an extended beta-hairpin is found that lines the wall of the exit tunnel in the center of the 70S ribosome. The chain is Large ribosomal subunit protein uL22 from Photorhabdus laumondii subsp. laumondii (strain DSM 15139 / CIP 105565 / TT01) (Photorhabdus luminescens subsp. laumondii).